We begin with the raw amino-acid sequence, 284 residues long: 2,3,4,5-tetrahydropyridine-2,6-dicarboxylate N-succinyltransferase (284 aa).

Substrate-binding residues include Arg111 and Asp148.

This sequence belongs to the transferase hexapeptide repeat family. As to quaternary structure, homotrimer.

The protein resides in the cytoplasm. It catalyses the reaction (S)-2,3,4,5-tetrahydrodipicolinate + succinyl-CoA + H2O = (S)-2-succinylamino-6-oxoheptanedioate + CoA. It functions in the pathway amino-acid biosynthesis; L-lysine biosynthesis via DAP pathway; LL-2,6-diaminopimelate from (S)-tetrahydrodipicolinate (succinylase route): step 1/3. This chain is 2,3,4,5-tetrahydropyridine-2,6-dicarboxylate N-succinyltransferase, found in Ehrlichia ruminantium (strain Gardel).